We begin with the raw amino-acid sequence, 456 residues long: MYKCALILAAGKGKRMKSDLPKVLHKVCDKEMVNHVIDTMRKSELQDVNVVIGKGAELVREATSKKNISYSLQSEQLGTGHAVKCAEDFLRGKDGVVAIFTGDAPLITEDTVKNLIDFHEKGGYKATIITALIDNPEGYGRIIRNVDGSVKKIVEHKDCTEDELKVKEINSAMYCFDIKSLLESLDKLNNNNVQGEYYLTDVIGILEEEGAKIGAISVPFEEILGVNSRLQLCQVGKVMQKRINEKHMENGSTLIDPDNTYIGADVEIESDTIIYPGNVLQGKTVIKTGCVLYPNSRIEDSVIGKNVTVQSSVILESKVGEDTTVGPFAYIRPESNIGNKVRIGDFVEIKKSTIGNNTKVSHLTYIGDAEVGEGCNFGCGTVVVNYDGKDKHKTVIGNKSFIGCNTNLVSPVTVEDNTYIAAGSTITNKVPEGSLAIARAKQVVKEGWVDKKGLLK.

The segment at 1 to 229 (MYKCALILAA…FEEILGVNSR (229 aa)) is pyrophosphorylase. UDP-N-acetyl-alpha-D-glucosamine contacts are provided by residues 8–11 (LAAG), Lys-22, Gln-73, and 78–79 (GT). Asp-103 is a Mg(2+) binding site. Gly-140, Glu-155, Asn-170, and Asn-227 together coordinate UDP-N-acetyl-alpha-D-glucosamine. Asn-227 contacts Mg(2+). Residues 230–250 (LQLCQVGKVMQKRINEKHMEN) form a linker region. The interval 251–456 (GSTLIDPDNT…GWVDKKGLLK (206 aa)) is N-acetyltransferase. UDP-N-acetyl-alpha-D-glucosamine is bound by residues Arg-332 and Lys-350. His-362 functions as the Proton acceptor in the catalytic mechanism. Residues Tyr-365 and Asn-376 each coordinate UDP-N-acetyl-alpha-D-glucosamine. Acetyl-CoA-binding positions include 385–386 (NY), Ala-422, and Arg-439.

It in the N-terminal section; belongs to the N-acetylglucosamine-1-phosphate uridyltransferase family. In the C-terminal section; belongs to the transferase hexapeptide repeat family. In terms of assembly, homotrimer. Mg(2+) is required as a cofactor.

Its subcellular location is the cytoplasm. The catalysed reaction is alpha-D-glucosamine 1-phosphate + acetyl-CoA = N-acetyl-alpha-D-glucosamine 1-phosphate + CoA + H(+). It carries out the reaction N-acetyl-alpha-D-glucosamine 1-phosphate + UTP + H(+) = UDP-N-acetyl-alpha-D-glucosamine + diphosphate. Its pathway is nucleotide-sugar biosynthesis; UDP-N-acetyl-alpha-D-glucosamine biosynthesis; N-acetyl-alpha-D-glucosamine 1-phosphate from alpha-D-glucosamine 6-phosphate (route II): step 2/2. It participates in nucleotide-sugar biosynthesis; UDP-N-acetyl-alpha-D-glucosamine biosynthesis; UDP-N-acetyl-alpha-D-glucosamine from N-acetyl-alpha-D-glucosamine 1-phosphate: step 1/1. The protein operates within bacterial outer membrane biogenesis; LPS lipid A biosynthesis. Its function is as follows. Catalyzes the last two sequential reactions in the de novo biosynthetic pathway for UDP-N-acetylglucosamine (UDP-GlcNAc). The C-terminal domain catalyzes the transfer of acetyl group from acetyl coenzyme A to glucosamine-1-phosphate (GlcN-1-P) to produce N-acetylglucosamine-1-phosphate (GlcNAc-1-P), which is converted into UDP-GlcNAc by the transfer of uridine 5-monophosphate (from uridine 5-triphosphate), a reaction catalyzed by the N-terminal domain. This chain is Bifunctional protein GlmU, found in Clostridium acetobutylicum (strain ATCC 824 / DSM 792 / JCM 1419 / IAM 19013 / LMG 5710 / NBRC 13948 / NRRL B-527 / VKM B-1787 / 2291 / W).